Consider the following 203-residue polypeptide: dITP/XTP pyrophosphatase (203 aa).

8–13 (TANKGK) serves as a coordination point for substrate. Mg(2+) is bound by residues glutamate 41 and aspartate 70. Catalysis depends on aspartate 70, which acts as the Proton acceptor. Substrate-binding positions include serine 71, 153-156 (FGYD), lysine 176, and 181-182 (HR).

The protein belongs to the HAM1 NTPase family. In terms of assembly, homodimer. Mg(2+) serves as cofactor.

It catalyses the reaction XTP + H2O = XMP + diphosphate + H(+). It carries out the reaction dITP + H2O = dIMP + diphosphate + H(+). The catalysed reaction is ITP + H2O = IMP + diphosphate + H(+). In terms of biological role, pyrophosphatase that catalyzes the hydrolysis of nucleoside triphosphates to their monophosphate derivatives, with a high preference for the non-canonical purine nucleotides XTP (xanthosine triphosphate), dITP (deoxyinosine triphosphate) and ITP. Seems to function as a house-cleaning enzyme that removes non-canonical purine nucleotides from the nucleotide pool, thus preventing their incorporation into DNA/RNA and avoiding chromosomal lesions. The polypeptide is dITP/XTP pyrophosphatase (Listeria monocytogenes serotype 4b (strain F2365)).